The primary structure comprises 329 residues: Urease accessory protein UreD 2 (329 aa).

A disordered region spans residues 100 to 120 (YSRPSDSSKFTNGTQSANSNT). Over residues 103–120 (PSDSSKFTNGTQSANSNT) the composition is skewed to polar residues.

The protein belongs to the UreD family. As to quaternary structure, ureD, UreF and UreG form a complex that acts as a GTP-hydrolysis-dependent molecular chaperone, activating the urease apoprotein by helping to assemble the nickel containing metallocenter of UreC. The UreE protein probably delivers the nickel.

It is found in the cytoplasm. Its function is as follows. Required for maturation of urease via the functional incorporation of the urease nickel metallocenter. This is Urease accessory protein UreD 2 from Psychrobacter cryohalolentis (strain ATCC BAA-1226 / DSM 17306 / VKM B-2378 / K5).